Here is a 939-residue protein sequence, read N- to C-terminus: Translation initiation factor IF-2 (939 aa).

The interval 48 to 355 (KFAPAPKVEN…KPEKKEKEEE (308 aa)) is disordered. A compositionally biased stretch (low complexity) spans 79-93 (QQNQAPKQPQQGTQN). Over residues 114 to 130 (SRDKNSRRDNNNRDGQR) the composition is skewed to basic and acidic residues. Residues 131-257 (DNNGGYRNND…NNDRNNNGGF (127 aa)) are compositionally biased toward low complexity. Residues 287–355 (RNNDRRDSAP…KPEKKEKEEE (69 aa)) are compositionally biased toward basic and acidic residues. One can recognise a tr-type G domain in the interval 440–609 (PRPPVVCVMG…LLTAEVNELK (170 aa)). A G1 region spans residues 449–456 (GHVDHGKT). 449-456 (GHVDHGKT) is a GTP binding site. The tract at residues 474 to 478 (GITQK) is G2. A G3 region spans residues 495–498 (DTPG). GTP-binding positions include 495–499 (DTPGH) and 549–552 (NKID). The G4 stretch occupies residues 549–552 (NKID). A G5 region spans residues 585 to 587 (SAH).

The protein belongs to the TRAFAC class translation factor GTPase superfamily. Classic translation factor GTPase family. IF-2 subfamily.

It localises to the cytoplasm. Its function is as follows. One of the essential components for the initiation of protein synthesis. Protects formylmethionyl-tRNA from spontaneous hydrolysis and promotes its binding to the 30S ribosomal subunits. Also involved in the hydrolysis of GTP during the formation of the 70S ribosomal complex. This Lachnospira eligens (strain ATCC 27750 / DSM 3376 / VPI C15-48 / C15-B4) (Eubacterium eligens) protein is Translation initiation factor IF-2.